The chain runs to 550 residues: Formin-binding protein 1-like (550 aa).

The region spanning M1–D263 is the F-BAR domain. Coiled-coil stretches lie at residues F66–V258 and L334–E426. Residues H339 to E416 enclose the REM-1 domain. The span at Q423 to E432 shows a compositional bias: basic and acidic residues. Residues Q423–E467 form a disordered region. The SH3 domain maps to P479–E540.

Belongs to the FNBP1 family. Homodimerizes, the dimers can polymerize end-to-end to form filamentous structures. Interacts with GTP-bound cdc42 and wasl/n-wasp.

Its subcellular location is the cytoplasm. It is found in the cytoskeleton. It localises to the cell cortex. The protein resides in the cytoplasmic vesicle. The protein localises to the cell membrane. Functionally, required to coordinate membrane tubulation with reorganization of the actin cytoskeleton during endocytosis. Promotes cdc42-induced actin polymerization by activating the wasl-waspip complex, the predominant form of wasl/n-wasp in cells. Essential for autophagy of intracellular bacterial pathogens. The protein is Formin-binding protein 1-like (fnbp1l) of Xenopus tropicalis (Western clawed frog).